The sequence spans 55 residues: Large ribosomal subunit protein bL33 (55 aa).

It belongs to the bacterial ribosomal protein bL33 family.

The sequence is that of Large ribosomal subunit protein bL33 from Baumannia cicadellinicola subsp. Homalodisca coagulata.